The primary structure comprises 391 residues: GTPase Obg (391 aa).

The region spanning 1-159 (MKFVDEAVVK…REIRLELLLL (159 aa)) is the Obg domain. In terms of domain architecture, OBG-type G spans 160-333 (ADVGMLGLPN…LCYKLADFME (174 aa)). Residues 166 to 173 (GLPNAGKS), 191 to 195 (FTTLI), 213 to 216 (DIPG), 283 to 286 (NKTD), and 314 to 316 (SAI) each bind GTP. 2 residues coordinate Mg(2+): Ser-173 and Thr-193. Acidic residues predominate over residues 367–383 (TEEDDDDWDDCDDEDDD). The disordered stretch occupies residues 367 to 391 (TEEDDDDWDDCDDEDDDGHVVYVRD).

The protein belongs to the TRAFAC class OBG-HflX-like GTPase superfamily. OBG GTPase family. As to quaternary structure, monomer. Mg(2+) is required as a cofactor.

It localises to the cytoplasm. Its function is as follows. An essential GTPase which binds GTP, GDP and possibly (p)ppGpp with moderate affinity, with high nucleotide exchange rates and a fairly low GTP hydrolysis rate. Plays a role in control of the cell cycle, stress response, ribosome biogenesis and in those bacteria that undergo differentiation, in morphogenesis control. This Vibrio campbellii (strain ATCC BAA-1116) protein is GTPase Obg.